The following is a 555-amino-acid chain: MTTKRLAKELGLLRQRSASSSAQRSSVCKQRFSFLIIIDFESTCWREKSSSGQEIIEFPAVLLSVCSGAVESEFHSYVQPQERPVLSAFCTELTGITQDQVDSAPPLHVVLSRFSRWLRSLQEERGVVFLTDSSGAAPSAQLCAFVTWSDWDLGVCLLYECKRKQLSVPEALKNWIDLRATYKLFYNRKPKGLRGALLDLGIEFTGREHSGLVDARNTALLAQRMMTDGCQLSITSPERRAQVKPRPHTRPSGLRERHTHLTNVKNSRDTHTNTNTHLTNVKNSRDTHTNTHTHLTSVKNTRDTHTHTNTHLTNVKSSRDAHTRLPALMNGSIRARHTHTQQTCANSSDTHIASASVCEVLVSPYTLLSVAHTHTHLQARSAALAGLSDTTYDPESPAPCWQDGELLVEEEEPSSYDDVILGAEPEEATPSEPRRCVSSSVFKTPPPLLRSGPLSPLTHSLGRIAAPLSVHAHTHALKQKVKVTSPLCVCGRRARRLTVGNGGPNHGRVFYCCPRRRSNTHTHTCDFFQWESGVLQNTLSMLTTHTPAAAHTHLR.

Residues 35–222 form the Exonuclease domain; the sequence is LIIIDFESTC…VDARNTALLA (188 aa). Residues D39, E41, and D152 each coordinate Mg(2+). E41 functions as the Proton acceptor in the catalytic mechanism. E41 provides a ligand contact to AMP. The active-site Proton acceptor is H209. H209 is an AMP binding site. Residue D214 coordinates Mg(2+). Positions 266–319 are disordered; that stretch reads NSRDTHTNTNTHLTNVKNSRDTHTNTHTHLTSVKNTRDTHTHTNTHLTNVKSSR. Residues 290 to 299 are compositionally biased toward polar residues; it reads NTHTHLTSVK. The Zn(2+) site is built by C488, C490, C513, and C525. The segment at 488-534 adopts a GRF-type zinc-finger fold; the sequence is CVCGRRARRLTVGNGGPNHGRVFYCCPRRRSNTHTHTCDFFQWESGV.

This sequence belongs to the ERI2 family. Requires Mg(2+) as cofactor.

This is ERI1 exoribonuclease 2 (eri2) from Danio rerio (Zebrafish).